A 120-amino-acid chain; its full sequence is Large ribosomal subunit protein eL8 (120 aa).

Belongs to the eukaryotic ribosomal protein eL8 family. In terms of assembly, part of the 50S ribosomal subunit. Probably part of the RNase P complex.

Its subcellular location is the cytoplasm. Functionally, multifunctional RNA-binding protein that recognizes the K-turn motif in ribosomal RNA, the RNA component of RNase P, box H/ACA, box C/D and box C'/D' sRNAs. In Methanosarcina mazei (strain ATCC BAA-159 / DSM 3647 / Goe1 / Go1 / JCM 11833 / OCM 88) (Methanosarcina frisia), this protein is Large ribosomal subunit protein eL8.